The sequence spans 235 residues: Small ribosomal subunit protein eS4 (235 aa).

Positions 38–99 (VTLLSIIRDY…GESYRVVYND (62 aa)) constitute an S4 RNA-binding domain.

This sequence belongs to the eukaryotic ribosomal protein eS4 family.

The sequence is that of Small ribosomal subunit protein eS4 (rps4e) from Thermoplasma acidophilum (strain ATCC 25905 / DSM 1728 / JCM 9062 / NBRC 15155 / AMRC-C165).